Here is a 732-residue protein sequence, read N- to C-terminus: MSNQKKRNFQIEAFKHRVVVDPKYADKTWQILERAIHQIYNQDASGLSFEELYRNAYNMVLHKFGEKLYTGFIATMTSHLKEKSKLIEAAQGGSFLEELNKKWNEHNKALEMIRDILMYMDRTYIESTKKTHVHPMGLNLWRDNVVHFTKIHTRLLNTLLDLVQKERIGEVIDRGLMRNVIKMFMDLGESVYQEDFEKPFLDASSEFYKVESQEFIESCDCGDYLKKSEKRLTEEIERVAHYLDAKSEEKITSVVEKEMIANHMQRLVHMENSGLVNMLLNDKYEDLGRMYNLFRRVTNGLVTVRDVMTSHLREMGKQLVTDPEKSKDPVEFVQRLLDERDKYDKIINTAFGNDKTFQNALNSSFEYFINLNARSPEFISLFVDDKLRKGLKGITDVDVEVILDKVMMLFRYLQEKDVFEKYYKQHLAKRLLSGKTVSDDAERSLIVKLKTECGYQFTSKLEGMFTDMKTSEDTMRGFYGSHPELSEGPTLIVQVLTTGSWPTQPAVPCNLPAEVSVLCEKFRSYYLGTHTGRRLSWQTNMGTADIKAIFGKGQKHELNVSTFQMCVLMLFNNSDRLSYKEIEQATEIPAADLKRCLQSLACVKGKNVIKKEPMSKDIGEEDLFVVNDKFTSKFYKVKIGTVVAQKETEPEKQETRQRVEEDRKPQIEAAIVRIMKSRKILDHNNIIAEVTKQLQPRFLANPTEIKKRIESLIERDFLERDSTDRKLYRYLA.

Residues 662–724 (DRKPQIEAAI…RDFLERDSTD (63 aa)) form the Cullin neddylation domain. Residue Lys676 forms a Glycyl lysine isopeptide (Lys-Gly) (interchain with G-Cter in NEDD8) linkage.

Belongs to the cullin family. In terms of assembly, interacts with CSN2 and RBX1A. Interacts with BTB/POZ domain-containing proteins BPM1, BPM2, BPM3, BPM6, BT1, BT2, BT3, BT5, AT1G01640, AT1G21780 and AT5G48510. Interacts with SR1IP1. Interacts with NPR3 and NPR4. Binds to NPR1; this interaction requires NPR3 and NPR4. Neddylated. Deneddylated via its interaction with the COP9 signalosome (CSN) complex.

Component of the cullin-RING ubiquitin ligases (CRL), or CUL3-RBX1-BTB protein E3 ligase complexes which mediate the ubiquitination and subsequent proteasomal degradation of target proteins. The functional specificity of the CRL complex depends on the BTB domain-containing protein as the substrate recognition component. Involved in embryo pattern formation and endosperm development. Required for the normal division and organization of the root stem cells and columella root cap cells. Regulates primary root growth by an unknown pathway, but in an ethylene-dependent manner. Functions in distal root patterning, by an ethylene-independent mechanism. Functionally redundant with CUL3B. This Arabidopsis thaliana (Mouse-ear cress) protein is Cullin-3A.